The following is a 188-amino-acid chain: Sulfopyruvate decarboxylase subunit beta (188 aa).

The protein belongs to the TPP enzyme family. In terms of assembly, heterododecamer composed of 6 subunits alpha and 6 subunits beta. Requires thiamine diphosphate as cofactor.

The catalysed reaction is 3-sulfopyruvate + H(+) = sulfoacetaldehyde + CO2. Its pathway is cofactor biosynthesis; coenzyme M biosynthesis; sulfoacetaldehyde from phosphoenolpyruvate and sulfite: step 4/4. Its activity is regulated as follows. Inhibited by oxygen when heated in air at 80 degrees Celsius. The enzyme is reactivated by addition of dithionite. In terms of biological role, involved in the biosynthesis of the coenzyme M (2-mercaptoethanesulfonic acid). Catalyzes the decarboxylation of sulfopyruvate to sulfoacetaldehyde. This chain is Sulfopyruvate decarboxylase subunit beta, found in Methanocaldococcus jannaschii (strain ATCC 43067 / DSM 2661 / JAL-1 / JCM 10045 / NBRC 100440) (Methanococcus jannaschii).